A 221-amino-acid polypeptide reads, in one-letter code: Glutathione S-transferase U25 (221 aa).

At Ala2 the chain carries N-acetylalanine. The GST N-terminal domain occupies 3 to 82; that stretch reads DEVILLDFWP…YIDEVWPSKT (80 aa). Residues 13 to 14, 39 to 40, 53 to 54, and 66 to 67 contribute to the glutathione site; these read SM, NK, KI, and ES. One can recognise a GST C-terminal domain in the interval 88–208; the sequence is DPYQRAQAKF…LPDSEKIIKF (121 aa). Residue Thr149 is modified to Phosphothreonine.

The protein belongs to the GST superfamily. Tau family.

Its subcellular location is the cytoplasm. The protein localises to the cytosol. The enzyme catalyses RX + glutathione = an S-substituted glutathione + a halide anion + H(+). May be involved in the conjugation of reduced glutathione to a wide number of exogenous and endogenous hydrophobic electrophiles and have a detoxification role against certain herbicides. This Arabidopsis thaliana (Mouse-ear cress) protein is Glutathione S-transferase U25 (GSTU25).